Reading from the N-terminus, the 231-residue chain is LexA repressor (231 aa).

The segment at residues 26–46 is a DNA-binding region (H-T-H motif); that stretch reads FDEMKLALDLRSKSGIHRLIT. Residues 79 to 98 form a disordered region; the sequence is VGFQPRVIDGDRPDRPRPAN. Positions 86 to 95 are enriched in basic and acidic residues; sequence IDGDRPDRPR. Catalysis depends on for autocatalytic cleavage activity residues Ser152 and Lys190.

This sequence belongs to the peptidase S24 family. In terms of assembly, homodimer.

The enzyme catalyses Hydrolysis of Ala-|-Gly bond in repressor LexA.. Represses a number of genes involved in the response to DNA damage (SOS response), including recA and lexA. In the presence of single-stranded DNA, RecA interacts with LexA causing an autocatalytic cleavage which disrupts the DNA-binding part of LexA, leading to derepression of the SOS regulon and eventually DNA repair. This is LexA repressor from Ruegeria pomeroyi (strain ATCC 700808 / DSM 15171 / DSS-3) (Silicibacter pomeroyi).